Here is a 115-residue protein sequence, read N- to C-terminus: Disintegrin EC6 subunit alpha (115 aa).

Positions 1 to 20 (MIQVLLVIICLAVFPYQGSS) are cleaved as a signal peptide. Positions 21–47 (IILESGNINDYEIVYPKKVAVLPTGAM) are excised as a propeptide. Positions 48–112 (NSVHPCCDPV…DCPRNRYKGK (65 aa)) constitute a Disintegrin domain. Cystine bridges form between Cys-53-Cys-76, Cys-67-Cys-73, Cys-72-Cys-97, and Cys-85-Cys-104. Residues 89-91 (MLD) carry the Cell attachment site; atypical (MLD) motif.

Belongs to the disintegrin family. Dimeric disintegrin subfamily. Heterodimer with subunit beta; disulfide-linked. Expressed by the venom gland.

The protein resides in the secreted. Its function is as follows. Potently inhibits adhesion of alpha-4/beta-1 (ITGA4/ITGB1) and alpha-9/beta-1 (ITGA9/ITGB1) integrins to VCAM1, and adhesion of alpha-5/beta-1 (ITGA5/ITGB1) integrin to fibronectin. Has a much less effect on alpha-IIb/beta-3 (ITGA2B/ITGB3) integrin. Also potently inhibits neutrophil migration across TNF-alpha-activated human umbilical endothelial cells. This chain is Disintegrin EC6 subunit alpha, found in Echis carinatus sochureki (Saw-scaled viper).